We begin with the raw amino-acid sequence, 413 residues long: Alpha-1-antitrypsin-like protein GS55-MS (413 aa).

A signal peptide spans 1–24 (MPSSISWGLLLLAGLSCLVAGSLA). Residues Asn-65, Asn-102, and Asn-266 are each glycosylated (N-linked (GlcNAc...) asparagine). The segment at 368 to 387 (GATFLEMMPMSLPPEVKFDK) is RCL.

This sequence belongs to the serpin family.

It localises to the secreted. In terms of biological role, inhibitor of serine proteases. Its primary target is elastase, but it also has a moderate affinity for plasmin and thrombin. The sequence is that of Alpha-1-antitrypsin-like protein GS55-MS from Ictidomys tridecemlineatus (Thirteen-lined ground squirrel).